The primary structure comprises 114 residues: Dolichyl-diphosphooligosaccharide--protein glycosyltransferase subunit DAD1 (114 aa).

Residues 1–30 (MPKAAGDAKLLIQSLNKAYAATPTNLKIID) lie on the Cytoplasmic side of the membrane. Residues 31–51 (LYVVFAVVTALLQVVYMGIVG) traverse the membrane as a helical segment. Ser-52 is a topological domain (lumenal). The helical transmembrane segment at 53–73 (FPFNSFLSGVLSCIGTAVLAV) threads the bilayer. Over 74-93 (CHRIQVNKDNKEFKDLAPER) the chain is Cytoplasmic. A helical membrane pass occupies residues 94 to 114 (AFADFVLCSLVLHLVIMNFLG).

Belongs to the DAD/OST2 family. Component of the oligosaccharyltransferase (OST) complex.

It localises to the endoplasmic reticulum membrane. The protein operates within protein modification; protein glycosylation. Subunit of the oligosaccharyl transferase (OST) complex that catalyzes the initial transfer of a defined glycan (Glc(3)Man(9)GlcNAc(2) in eukaryotes) from the lipid carrier dolichol-pyrophosphate to an asparagine residue within an Asn-X-Ser/Thr consensus motif in nascent polypeptide chains, the first step in protein N-glycosylation. N-glycosylation occurs cotranslationally and the complex associates with the Sec61 complex at the channel-forming translocon complex that mediates protein translocation across the endoplasmic reticulum (ER). All subunits are required for a maximal enzyme activity. This chain is Dolichyl-diphosphooligosaccharide--protein glycosyltransferase subunit DAD1 (DAD1), found in Hordeum vulgare (Barley).